A 332-amino-acid chain; its full sequence is MKKHAKVYYSENLVEQVNEFETSFEIKPLERGLGNTLGNALRRTVLSSIPSCAVFGVKIEGIKHEFTVLDDVIEDVVTILNNLKRVRFFYNPSVFSQNSIHVASFLGQKAGQIYARDIESHSGLKIVNPDLYIADVSKVGALKFELFITNGKGFVDFETNKKYVNEVISLLESQIEGSVLAVDSDFSPVLNANYQAVEINSASPIIEEKLNFSIKTDGSIFAKDALSQGAKILIAHLNLLADVENLNKFSADFFGDQEIKEEPIRRFSNSIDALDLSVRSLNALRRAQYYKISDIEKLSQDDFENIKNLGRKSVQEIMEKLQNYKNENKGEN.

Positions 1–244 (MKKHAKVYYS…AHLNLLADVE (244 aa)) are alpha N-terminal domain (alpha-NTD). The tract at residues 259–332 (IKEEPIRRFS…NYKNENKGEN (74 aa)) is alpha C-terminal domain (alpha-CTD).

Belongs to the RNA polymerase alpha chain family. As to quaternary structure, homodimer. The RNAP catalytic core consists of 2 alpha, 1 beta, 1 beta' and 1 omega subunit. When a sigma factor is associated with the core the holoenzyme is formed, which can initiate transcription.

The enzyme catalyses RNA(n) + a ribonucleoside 5'-triphosphate = RNA(n+1) + diphosphate. Its function is as follows. DNA-dependent RNA polymerase catalyzes the transcription of DNA into RNA using the four ribonucleoside triphosphates as substrates. The chain is DNA-directed RNA polymerase subunit alpha from Mesomycoplasma hyopneumoniae (strain 232) (Mycoplasma hyopneumoniae).